A 226-amino-acid chain; its full sequence is Cobalt transport protein CbiM 2 (226 aa).

The next 6 helical transmembrane spans lie at 6-26 (GFLP…VVAY), 43-63 (MLLG…MPSV), 75-95 (LGAI…VLLF), 107-127 (TLGA…AAVF), 135-155 (FPFG…TYVT), and 181-201 (VFAL…VVVM).

This sequence belongs to the CbiM family. Forms an energy-coupling factor (ECF) transporter complex composed of an ATP-binding protein (A component, CbiO), a transmembrane protein (T component, CbiQ) and 2 possible substrate-capture proteins (S components, CbiM and CbiN) of unknown stoichimetry.

The protein localises to the cell inner membrane. Its pathway is cofactor biosynthesis; adenosylcobalamin biosynthesis. Functionally, part of the energy-coupling factor (ECF) transporter complex CbiMNOQ involved in cobalt import. This is Cobalt transport protein CbiM 2 from Pelobacter propionicus (strain DSM 2379 / NBRC 103807 / OttBd1).